The sequence spans 725 residues: NAD(+) hydrolase SARM1 (725 aa).

Residues 1–27 (MVLTILFSAYKLCRFFAMSSPRPGAER) constitute a mitochondrion transit peptide. The ARM 1 repeat unit spans residues 60 to 100 (EVQGALERALPELQQALSALKQAGGGRAVGAGLAEVFQLVE). Residues tryptophan 103, arginine 110, 149–158 (EQILVAENRR), and 191–194 (HMFK) contribute to the NAD(+) site. ARM repeat units follow at residues 114–153 (QGLC…QILV), 155–194 (ENRR…HMFK), 197–236 (EETC…NCAM), 238–281 (GGQA…LATN), 282–315 (KEVE…CLVD), 316–355 (ASDT…AEAV), and 360–403 (KNRN…EEVP). SAM domains are found at residues 413–477 (WKEA…LKTF) and 483–549 (CDRS…MLHS). Phosphoserine is present on residues serine 549 and serine 559. The region spanning 561–704 (DVPDVFISYR…KIIRFLQGRS (144 aa)) is the TIR domain. NAD(+) is bound by residues 570 to 571 (RR) and glutamate 600. Glutamate 643 is an active-site residue. Positions 705–725 (SRDSSAGSDTSLEGAAPMGPT) are disordered.

This sequence belongs to the SARM1 family. Homooctamer; forms an octameric ring via SAM domains. Interacts with TICAM1/TRIF and thereby interferes with TICAM1/TRIF function. Interacts with MAPK10/JNK3 and SDC2 (via cytoplasmic domain). Phosphorylation at Ser-549 by JNK kinases (MAPK8, MAPK9 and /or MAPK10) enhance the NAD(+) hydrolase (NADase) activity. Phosphorylation at Ser-549 and subsequent activation takes place in response to oxidative stress conditions and inhibits mitochondrial respiration. Highest expression seen in the spleen and the brain, followed by lung, kidney, liver and other tissues.

It is found in the cytoplasm. It localises to the cell projection. The protein localises to the axon. Its subcellular location is the dendrite. The protein resides in the synapse. It is found in the mitochondrion. The enzyme catalyses NAD(+) + H2O = ADP-D-ribose + nicotinamide + H(+). It catalyses the reaction NAD(+) = cyclic ADP-beta-D-ribose + nicotinamide + H(+). It carries out the reaction NADP(+) + H2O = ADP-D-ribose 2'-phosphate + nicotinamide + H(+). With respect to regulation, autoinhibited: in the inactive state, the enzymatic TIR domain is held apart by the autoinhibiting ARM repeats. NAD(+)-binding to ARM repeats maintains an inactive state by promoting interaction between ARM repeats and the TIR domain, thereby facilitating inhibition of the enzymatic TIR domain. Following activation, possibly by nicotinamide mononucleotide (NMN), auto-inhibitory interactions are released, allowing self-association of the TIR domains and subsequent activation of the NAD(+) hydrolase (NADase) activity. Self-association of TIR domains is facilitated by the octamer of SAM domains. Its function is as follows. NAD(+) hydrolase, which plays a key role in axonal degeneration following injury by regulating NAD(+) metabolism. Acts as a negative regulator of MYD88- and TRIF-dependent toll-like receptor signaling pathway by promoting Wallerian degeneration, an injury-induced form of programmed subcellular death which involves degeneration of an axon distal to the injury site. Wallerian degeneration is triggered by NAD(+) depletion: in response to injury, SARM1 is activated and catalyzes cleavage of NAD(+) into ADP-D-ribose (ADPR), cyclic ADPR (cADPR) and nicotinamide; NAD(+) cleavage promoting cytoskeletal degradation and axon destruction. Also able to hydrolyze NADP(+), but not other NAD(+)-related molecules. Can activate neuronal cell death in response to stress. Regulates dendritic arborization through the MAPK4-JNK pathway. Involved in innate immune response: inhibits both TICAM1/TRIF- and MYD88-dependent activation of JUN/AP-1, TRIF-dependent activation of NF-kappa-B and IRF3, and the phosphorylation of MAPK14/p38. In Sus scrofa (Pig), this protein is NAD(+) hydrolase SARM1.